Here is a 427-residue protein sequence, read N- to C-terminus: Dihydroorotase (427 aa).

Residues H60 and H62 each contribute to the Zn(2+) site. Residues 62-64 (HLR) and N94 each bind substrate. Residues D152, H179, and H232 each coordinate Zn(2+). N278 serves as a coordination point for substrate. D305 lines the Zn(2+) pocket. Residue D305 is part of the active site. Substrate contacts are provided by residues H309 and 323–324 (FG).

The protein belongs to the metallo-dependent hydrolases superfamily. DHOase family. Class I DHOase subfamily. It depends on Zn(2+) as a cofactor.

It catalyses the reaction (S)-dihydroorotate + H2O = N-carbamoyl-L-aspartate + H(+). It participates in pyrimidine metabolism; UMP biosynthesis via de novo pathway; (S)-dihydroorotate from bicarbonate: step 3/3. Functionally, catalyzes the reversible cyclization of carbamoyl aspartate to dihydroorotate. The polypeptide is Dihydroorotase (Bacillus caldolyticus).